We begin with the raw amino-acid sequence, 739 residues long: MSSESKEQHNVSPRDSAEGNDSYPSGIHLELQRESSTDFKQFETNDQCRPYHRILIERQEKSDTNFKEFVIKKLQKNCQCSPAKAKNMILGFLPVLQWLPKYDLKKNILGDVMSGLIVGILLVPQSIAYSLLAGQEPVYGLYTSFFASIIYFLLGTSRHISVGIFGVLCLMIGETVDRELQKAGYDNAHSAPSLGMVSNGSTLLNHTSDRICDKSCYAIMVGSTVTFIAGVYQVAMGFFQVGFVSVYLSDALLSGFVTGASFTILTSQAKYLLGLNLPRTNGVGSLITTWIHVFRNIHKTNLCDLITSLLCLLVLLPTKELNEHFKSKLKAPIPIELVVVVAATLASHFGKLHENYNSSIAGHIPTGFMPPKVPEWNLIPSVAVDAIAISIIGFAITVSLSEMFAKKHGYTVKANQEMYAIGFCNIIPSFFHCFTTSAALAKTLVKESTGCHTQLSGVVTALVLLLVLLVIAPLFYSLQKSVLGVITIVNLRGALRKFRDLPKMWSISRMDTVIWFVTMLSSALLSTEIGLLVGVCFSIFCVILRTQKPKSSLLGLVEESEVFESVSAYKNLQIKPGIKIFRFVAPLYYINKECFKSALYKQTVNPILIKVAWKKAAKRKIKEKVVTLGGIQDEMSVQLSHDPLELHTIVIDCSAIQFLDTAGIHTLKEVRRDYEAIGIQVLLAQCNPTVRDSLTNGEYCKKEEENLLFYSVYEAMAFAEVSKNQKGVCVPNGLSLSSD.

The tract at residues 1–27 (MSSESKEQHNVSPRDSAEGNDSYPSGI) is disordered. A phosphoserine mark is found at S12 and S16. A run of 2 helical transmembrane segments spans residues 112–132 (VMSGLIVGILLVPQSIAYSLL) and 137–157 (PVYGLYTSFFASIIYFLLGTS). N199 and N205 each carry an N-linked (GlcNAc...) asparagine glycan. 2 consecutive transmembrane segments (helical) span residues 219 to 239 (IMVGSTVTFIAGVYQVAMGFF) and 242 to 262 (GFVSVYLSDALLSGFVTGASF). N357 is a glycosylation site (N-linked (GlcNAc...) asparagine). The next 4 membrane-spanning stretches (helical) occupy residues 378-398 (LIPSVAVDAIAISIIGFAITV), 420-440 (AIGFCNIIPSFFHCFTTSAAL), 455-475 (LSGVVTALVLLLVLLVIAPLF), and 524-544 (LLSTEIGLLVGVCFSIFCVIL). In terms of domain architecture, STAS spans 568–719 (AYKNLQIKPG…YSVYEAMAFA (152 aa)).

Belongs to the SLC26A/SulP transporter (TC 2.A.53) family. In terms of processing, N-glycosylated. Ubiquitously expressed.

The protein localises to the cell membrane. The protein resides in the apical cell membrane. It carries out the reaction oxalate(in) + sulfate(out) = oxalate(out) + sulfate(in). It catalyses the reaction sulfate(out) + 2 chloride(in) = sulfate(in) + 2 chloride(out). The catalysed reaction is oxalate(out) + 2 chloride(in) = oxalate(in) + 2 chloride(out). The enzyme catalyses bromide(in) + chloride(out) = bromide(out) + chloride(in). It carries out the reaction nitrate(in) + chloride(out) = nitrate(out) + chloride(in). It catalyses the reaction iodide(in) + chloride(out) = iodide(out) + chloride(in). With respect to regulation, an extracellular acidic pH inhibits chloride-sulfate and chloride-oxalate exchange activity whereas an intracellular acidic pH activates chloride-sulfate exchange with no effect on chloride-oxalate exchange activity. In terms of biological role, sulfate transporter which mediates sulfate uptake into chondrocytes in order to maintain adequate sulfation of proteoglycans which is needed for cartilage development. Mediates electroneutral anion exchange of sulfate ions for oxalate ions and of sulfate and oxalate ions for chloride ions. Mediates exchange of sulfate and oxalate ions for hydroxyl ions and of chloride ions for bromide, iodide and nitrate ions. The coupling of sulfate transport to both hydroxyl and chloride ions likely serves to ensure transport at both acidic pH when most sulfate uptake is mediated by sulfate-hydroxide exchange and alkaline pH when most sulfate uptake is mediated by sulfate-chloride exchange. Essential for chondrocyte proliferation, differentiation and cell size expansion. This Homo sapiens (Human) protein is Sulfate transporter (SLC26A2).